Reading from the N-terminus, the 537-residue chain is Cytochrome P450 monooxygenase AOL_s00215g282 (537 aa).

A helical membrane pass occupies residues 9-29; that stretch reads ATVVLCGSIVTVSIAYVIFVV. N126 is a glycosylation site (N-linked (GlcNAc...) asparagine). C451 lines the heme pocket.

This sequence belongs to the cytochrome P450 family. Heme is required as a cofactor.

The protein localises to the membrane. The protein operates within secondary metabolite biosynthesis; terpenoid biosynthesis. Cytochrome P450 monooxygenase; part of the gene cluster that mediates the biosynthesis of sesquiterpenyl epoxy-cyclohexenoids (SECs) such as anthrobotrisins and arthrosporols, metabolites that possess a novel hybrid carbon skeleton consisting of a polyketide-derived epoxycyclohexenol combined with a terpenoid-derived monocyclic sesquiterpenol substructure (PKS-PTS hybrid). The SEC pathway plays an important role for fungal soil colonization via decreasing fungal nematode-capturing ability. Within the pathway, the cytochrome P450 monooxygenase AOL_s00215g282 acts as a m-cresol hydrolase that converts m-cresol to toluquinol. The pathway begins with the biosynthesis of 6-methylsalicylic acid (6-MSA), the first precursor of the polyketide-derived epoxycyclohexenol in arthrosporols, by the polyketide synthase (PKS) AOL_s00215g283 via condensation of 1 acetate and 3 malonate units. The 6-methylsalicylic acid decarboxylase AOL_s00215g281 then catalyzes the decarboxylation of 6-methylsalicylic acid to yield m-cresol. The cytochrome P450 monooxygenase AOL_s00215g282 further oxidizes m-cresol to yield toluquinol. With the assistance of the oxidoreductase AOL_s00215g277, the polyprenyl transferase AOL_s00215g276 catalyzes the farnesylation of toluquinol to produce farnesyl hydroquinone, the hybrid precursor for biosynthesis of SECs. Farnesyl hydroquinone undergoes epoxidation and then subsequent dehydrogenation to form farnesyl epoxy-quinone, the first and simplest SEC. The cytochrome P450 monooxygenase AOL_s00215g278 and the FAD-dependent monooxygenase AOL_s00215g279 might be involved in the oxygenation of the phenol moiety, most likely in the epoxy formation. The cytochrome P450 monooxygenases AOL_s00215g274 and AOL_s00215g280 are involved in specific regional ketone reductions at respectively C-4 and C-1 of farnesyl epoxy-quinone PubMed:33823587. The chain is Cytochrome P450 monooxygenase AOL_s00215g282 from Arthrobotrys oligospora (strain ATCC 24927 / CBS 115.81 / DSM 1491) (Nematode-trapping fungus).